A 171-amino-acid chain; its full sequence is Der GTPase-activating protein YihI (171 aa).

2 disordered regions span residues 1–99 and 145–171; these read MKKP…QAEL and LSYDDDDEDDEEDEKQEDMMRLLRGGN. The segment covering 20-30 has biased composition (basic and acidic residues); the sequence is TREELNQEARD. Basic residues predominate over residues 31-40; the sequence is RKRLKKHRGH. The span at 147–160 shows a compositional bias: acidic residues; the sequence is YDDDDEDDEEDEKQ.

It belongs to the YihI family. In terms of assembly, interacts with Der.

Its function is as follows. A GTPase-activating protein (GAP) that modifies Der/EngA GTPase function. May play a role in ribosome biogenesis. The sequence is that of Der GTPase-activating protein YihI from Salmonella choleraesuis (strain SC-B67).